Reading from the N-terminus, the 255-residue chain is F-box/SPRY domain-containing protein 1 (255 aa).

An F-box domain is found at 3–51 (DPVAALCNYNVLEVIFSYLELDDLSHCSQVCKSWYHFLNDENSDVWRWH). A B30.2/SPRY domain is found at 61–253 (LKSDLLSSVP…VSMVYLGTPL (193 aa)).

This sequence belongs to the FBXO45/Fsn family. As to quaternary structure, component of an E3 ubiquitin ligase complex composed of hiw and Fsn.

The protein resides in the synapse. Its pathway is protein modification; protein ubiquitination. Its function is as follows. Required in the presynaptic motoneuron to down-regulate the levels of wnd and restrain synaptic terminal growth at the neuromuscular junction (NMJ). The sequence is that of F-box/SPRY domain-containing protein 1 from Drosophila sechellia (Fruit fly).